The sequence spans 168 residues: Photosystem I assembly protein Ycf3 (168 aa).

3 TPR repeats span residues 35 to 68 (AFTY…EIDP), 72 to 105 (SYIL…NPFL), and 120 to 153 (GEQA…TPGN).

Belongs to the Ycf3 family. Interacts with Y3IP1.

Its subcellular location is the plastid. It localises to the chloroplast thylakoid membrane. In terms of biological role, essential for the assembly of the photosystem I (PSI) complex. May act as a chaperone-like factor to guide the assembly of the PSI subunits. The chain is Photosystem I assembly protein Ycf3 from Arabidopsis thaliana (Mouse-ear cress).